The following is a 357-amino-acid chain: Membrane-bound lytic murein transglycosylase C (357 aa).

A signal peptide spans 1–16 (MKKMLALLVIAPLLVS). A lipid anchor (N-palmitoyl cysteine) is attached at Cys17. The S-diacylglycerol cysteine moiety is linked to residue Cys17.

This sequence belongs to the transglycosylase Slt family.

Its subcellular location is the cell outer membrane. It catalyses the reaction Exolytic cleavage of the (1-&gt;4)-beta-glycosidic linkage between N-acetylmuramic acid (MurNAc) and N-acetylglucosamine (GlcNAc) residues in peptidoglycan, from either the reducing or the non-reducing ends of the peptidoglycan chains, with concomitant formation of a 1,6-anhydrobond in the MurNAc residue.. Murein-degrading enzyme. May play a role in recycling of muropeptides during cell elongation and/or cell division. The polypeptide is Membrane-bound lytic murein transglycosylase C (Pectobacterium atrosepticum (strain SCRI 1043 / ATCC BAA-672) (Erwinia carotovora subsp. atroseptica)).